Reading from the N-terminus, the 510-residue chain is NAD(P)H-quinone oxidoreductase subunit 2, chloroplastic (510 aa).

The next 11 membrane-spanning stretches (helical) occupy residues 24–44 (LLLF…GLIL), 59–79 (WFYF…LFRW), 99–119 (IFQF…VEYI), 124–144 (MAIT…MFLC), 149–169 (LITI…LSGY), 183–203 (YLLM…WLYG), 295–315 (WHLL…LIAI), 323–343 (MLAY…IVGD), 347–367 (GYAS…GTFA), 395–415 (ALSS…AGFF), and 418–438 (LYLF…IGLL).

Belongs to the complex I subunit 2 family. NDH is composed of at least 16 different subunits, 5 of which are encoded in the nucleus.

It localises to the plastid. The protein localises to the chloroplast thylakoid membrane. It carries out the reaction a plastoquinone + NADH + (n+1) H(+)(in) = a plastoquinol + NAD(+) + n H(+)(out). The catalysed reaction is a plastoquinone + NADPH + (n+1) H(+)(in) = a plastoquinol + NADP(+) + n H(+)(out). Functionally, NDH shuttles electrons from NAD(P)H:plastoquinone, via FMN and iron-sulfur (Fe-S) centers, to quinones in the photosynthetic chain and possibly in a chloroplast respiratory chain. The immediate electron acceptor for the enzyme in this species is believed to be plastoquinone. Couples the redox reaction to proton translocation, and thus conserves the redox energy in a proton gradient. The protein is NAD(P)H-quinone oxidoreductase subunit 2, chloroplastic of Asparagus officinalis (Garden asparagus).